We begin with the raw amino-acid sequence, 446 residues long: Protein odr-4 homolog (446 aa).

Residues 76 to 96 (ASQVGRMLPGGLMVLGVFLMT) traverse the membrane as a helical segment. Positions 394 to 415 (HPEKRESEPASQHLESKPENKA) are enriched in basic and acidic residues. Residues 394–417 (HPEKRESEPASQHLESKPENKARS) are disordered. A helical transmembrane segment spans residues 426–446 (GLVISTIVASIAIIISFYYIM).

The protein belongs to the ODR-4 family.

The protein localises to the membrane. In terms of biological role, may play a role in the trafficking of a subset of G-protein coupled receptors. The chain is Protein odr-4 homolog (odr4) from Xenopus laevis (African clawed frog).